The primary structure comprises 120 residues: Response regulator receiver protein CpdR (120 aa).

A Response regulatory domain is found at 3–117 (RILLAEDDND…DLVNEIEKML (115 aa)). 4-aspartylphosphate is present on D52.

In terms of processing, is phosphorylated by ChpT-P on Asp-52.

Its subcellular location is the cytoplasm. Its function is as follows. Component of a regulatory phosphorelay system that controls B.abortus cell growth, division, and intracellular survival inside mammalian host cells. This signaling pathway is composed of CckA, ChpT, CtrA and CpdR. CpdR is a response regulator substrate of ChpT. Unphosphorylated CpdR controls steady-state levels of CtrA in the B.abortus cell, likely via CtrA destabilization and activation of its proteolysis. The chain is Response regulator receiver protein CpdR from Brucella abortus (strain 2308).